The sequence spans 128 residues: Large ribosomal subunit protein eL8 (128 aa).

Belongs to the eukaryotic ribosomal protein eL8 family. As to quaternary structure, part of the 50S ribosomal subunit. Probably part of the RNase P complex.

It localises to the cytoplasm. In terms of biological role, multifunctional RNA-binding protein that recognizes the K-turn motif in ribosomal RNA, the RNA component of RNase P, box H/ACA, box C/D and box C'/D' sRNAs. This is Large ribosomal subunit protein eL8 from Staphylothermus marinus (strain ATCC 43588 / DSM 3639 / JCM 9404 / F1).